The following is a 125-amino-acid chain: Large ribosomal subunit protein bL12 (125 aa).

This sequence belongs to the bacterial ribosomal protein bL12 family. Homodimer. Part of the ribosomal stalk of the 50S ribosomal subunit. Forms a multimeric L10(L12)X complex, where L10 forms an elongated spine to which 2 to 4 L12 dimers bind in a sequential fashion. Binds GTP-bound translation factors.

Its function is as follows. Forms part of the ribosomal stalk which helps the ribosome interact with GTP-bound translation factors. Is thus essential for accurate translation. The polypeptide is Large ribosomal subunit protein bL12 (Francisella tularensis subsp. tularensis (strain SCHU S4 / Schu 4)).